We begin with the raw amino-acid sequence, 445 residues long: tRNA-2-methylthio-N(6)-dimethylallyladenosine synthase (445 aa).

The 117-residue stretch at 13–129 (KKLFIKTYGC…LPAMARAGRG (117 aa)) folds into the MTTase N-terminal domain. Positions 22, 58, 92, 163, 167, and 170 each coordinate [4Fe-4S] cluster. In terms of domain architecture, Radical SAM core spans 149-383 (TRRAPAAFLT…LTSQQKAAQE (235 aa)). The TRAM domain occupies 383–445 (EGMVGRELGV…PNSLAGVLAA (63 aa)).

Belongs to the methylthiotransferase family. MiaB subfamily. In terms of assembly, monomer. Requires [4Fe-4S] cluster as cofactor.

The protein localises to the cytoplasm. The catalysed reaction is N(6)-dimethylallyladenosine(37) in tRNA + (sulfur carrier)-SH + AH2 + 2 S-adenosyl-L-methionine = 2-methylsulfanyl-N(6)-dimethylallyladenosine(37) in tRNA + (sulfur carrier)-H + 5'-deoxyadenosine + L-methionine + A + S-adenosyl-L-homocysteine + 2 H(+). Functionally, catalyzes the methylthiolation of N6-(dimethylallyl)adenosine (i(6)A), leading to the formation of 2-methylthio-N6-(dimethylallyl)adenosine (ms(2)i(6)A) at position 37 in tRNAs that read codons beginning with uridine. In Paracoccus denitrificans (strain Pd 1222), this protein is tRNA-2-methylthio-N(6)-dimethylallyladenosine synthase.